The chain runs to 508 residues: Catalase (508 aa).

The N-terminal stretch at 1 to 21 (MHMSKSFLLISMGLASISVHA) is a signal peptide. Residues H72 and N145 contribute to the active site. Heme is bound at residue Y353. Residues 373 to 392 (PKSPVANHNQDGPSNNSTGL) are compositionally biased toward polar residues. Positions 373 to 396 (PKSPVANHNQDGPSNNSTGLGNVD) are disordered.

This sequence belongs to the catalase family. It depends on heme as a cofactor.

Its subcellular location is the periplasm. The catalysed reaction is 2 H2O2 = O2 + 2 H2O. In terms of biological role, decomposes hydrogen peroxide into water and oxygen; serves to protect cells from the toxic effects of hydrogen peroxide. In Vibrio vulnificus (strain YJ016), this protein is Catalase.